A 313-amino-acid polypeptide reads, in one-letter code: Nodulation protein D 3 (313 aa).

An HTH lysR-type domain is found at 6-63 (LDLNLLVALDALMTKRSVTAAARSINLSQPAMSSAIARLRSYFQDELFRMQGRELITT). The H-T-H motif DNA-binding region spans 23–42 (VTAAARSINLSQPAMSSAIA).

It belongs to the LysR transcriptional regulatory family.

In terms of biological role, nodD regulates the expression of the nodABCFE genes which encode other nodulation proteins. NodD is also a negative regulator of its own expression. Binds flavonoids as inducers. The protein is Nodulation protein D 3 (nodD3) of Rhizobium meliloti (strain 1021) (Ensifer meliloti).